A 156-amino-acid chain; its full sequence is Arginine repressor (156 aa).

It belongs to the ArgR family.

The protein localises to the cytoplasm. Its pathway is amino-acid biosynthesis; L-arginine biosynthesis [regulation]. Regulates arginine biosynthesis genes. In Vibrio cholerae serotype O1 (strain ATCC 39315 / El Tor Inaba N16961), this protein is Arginine repressor.